The following is a 418-amino-acid chain: Tyrosine--tRNA ligase (418 aa).

Tyr-34 contacts L-tyrosine. The short motif at 39–48 (PTADSLHLGH) is the 'HIGH' region element. The L-tyrosine site is built by Tyr-169 and Gln-173. Residues 229-233 (KFGKS) carry the 'KMSKS' region motif. Lys-232 serves as a coordination point for ATP. The S4 RNA-binding domain occupies 352 to 418 (NNIVELLVSS…GKKKYFVLTY (67 aa)).

Belongs to the class-I aminoacyl-tRNA synthetase family. TyrS type 1 subfamily. Homodimer.

Its subcellular location is the cytoplasm. The enzyme catalyses tRNA(Tyr) + L-tyrosine + ATP = L-tyrosyl-tRNA(Tyr) + AMP + diphosphate + H(+). Catalyzes the attachment of tyrosine to tRNA(Tyr) in a two-step reaction: tyrosine is first activated by ATP to form Tyr-AMP and then transferred to the acceptor end of tRNA(Tyr). This Streptococcus pneumoniae (strain ATCC BAA-255 / R6) protein is Tyrosine--tRNA ligase.